The following is a 365-amino-acid chain: Cobalt-precorrin-5B C(1)-methyltransferase (365 aa).

Belongs to the CbiD family.

The enzyme catalyses Co-precorrin-5B + S-adenosyl-L-methionine = Co-precorrin-6A + S-adenosyl-L-homocysteine. Its pathway is cofactor biosynthesis; adenosylcobalamin biosynthesis; cob(II)yrinate a,c-diamide from sirohydrochlorin (anaerobic route): step 6/10. In terms of biological role, catalyzes the methylation of C-1 in cobalt-precorrin-5B to form cobalt-precorrin-6A. This is Cobalt-precorrin-5B C(1)-methyltransferase from Clostridium perfringens (strain 13 / Type A).